Reading from the N-terminus, the 337-residue chain is Prenyltransferase terC (337 aa).

Mg(2+) is bound by residues Asp-111 and Asp-115.

Belongs to the FPP/GGPP synthase family. It depends on Mg(2+) as a cofactor.

The protein operates within secondary metabolite biosynthesis. Its function is as follows. Prenyltransferase; part of the gene cluster that mediates the biosynthesis of terpendoles, indole-diterpene (IDT) mycotoxins including terpendole I, terpendole K, terpendole C, as well as the kinesin Eg5 inhibitor terpendole E. Terpendoles biosynthesis begins with the synthesis of geranylgeranyl diphosphate (GGPP) by a yet unidentified GGPP synthase. Condensation of indole-3-glycerol phosphate with GGPP by the prenyltransferase terC then forms 3-geranylgeranylindole (3-GGI), followed by epoxidation and cyclization of this intermediate (by the FAD-dependent monooxygeanse terM and the terpene cyclase terB) to form paspaline. The cytochrome monooxygenase terQ then hydroxylates paspalline at C-11 to yield terpendole E. The cytochrome monooxygenase terP converts terpendole E to 13-desoxyterpendole I, and terQ converts 13-desoxyterpendole I into terpendole I. TerF and terK are required for conversion of terpendole I to terpendole C which is further converted to terpendole K. This chain is Prenyltransferase terC, found in Tolypocladium album (Soil fungus).